A 228-amino-acid chain; its full sequence is Geranylgeranylglyceryl phosphate synthase (228 aa).

Lys14 contacts sn-glycerol 1-phosphate. Mg(2+)-binding residues include Asp16 and Thr42. Sn-glycerol 1-phosphate is bound by residues Tyr160–Gly165, Gly190, and Gly210–Asn211.

The protein belongs to the GGGP/HepGP synthase family. Group I subfamily. Mg(2+) serves as cofactor.

It localises to the cytoplasm. It carries out the reaction sn-glycerol 1-phosphate + (2E,6E,10E)-geranylgeranyl diphosphate = sn-3-O-(geranylgeranyl)glycerol 1-phosphate + diphosphate. The protein operates within membrane lipid metabolism; glycerophospholipid metabolism. Functionally, prenyltransferase that catalyzes the transfer of the geranylgeranyl moiety of geranylgeranyl diphosphate (GGPP) to the C3 hydroxyl of sn-glycerol-1-phosphate (G1P). This reaction is the first ether-bond-formation step in the biosynthesis of archaeal membrane lipids. The sequence is that of Geranylgeranylglyceryl phosphate synthase from Methanocella arvoryzae (strain DSM 22066 / NBRC 105507 / MRE50).